The following is a 185-amino-acid chain: Transposon Tn3 resolvase (185 aa).

The 136-residue stretch at 2–137 (RIFGYARVST…EGRQEAKLKG (136 aa)) folds into the Resolvase/invertase-type recombinase catalytic domain. The O-(5'-phospho-DNA)-serine intermediate role is filled by serine 10. Residues 161 to 180 (ATEIAHQLSIARSTVYKILE) constitute a DNA-binding region (H-T-H motif).

It belongs to the site-specific recombinase resolvase family.

Resolvase catalyzes the resolution (a site-specific recombination) of the cointegrated replicon to yield the final transposition products. The protein is Transposon Tn3 resolvase (tnpR) of Escherichia coli.